The following is a 166-amino-acid chain: Large ribosomal subunit protein uL10 (166 aa).

It belongs to the universal ribosomal protein uL10 family. In terms of assembly, part of the ribosomal stalk of the 50S ribosomal subunit. The N-terminus interacts with L11 and the large rRNA to form the base of the stalk. The C-terminus forms an elongated spine to which L12 dimers bind in a sequential fashion forming a multimeric L10(L12)X complex.

Forms part of the ribosomal stalk, playing a central role in the interaction of the ribosome with GTP-bound translation factors. This is Large ribosomal subunit protein uL10 from Aeromonas hydrophila subsp. hydrophila (strain ATCC 7966 / DSM 30187 / BCRC 13018 / CCUG 14551 / JCM 1027 / KCTC 2358 / NCIMB 9240 / NCTC 8049).